The sequence spans 337 residues: MNAPQAPVLVADIGGTNARFALANPTLTSAPLLNDSLREFAVIEFPSLSEAAQHYLHHIGIHTTKGVFAIAGHVDGDEARITNHPWVITRTRTATMLGFDTLHLINDFVAQAMAISVLGPQDVIQIGSAKWEQVPLSAATRNYGIIGPGTGLGVGGLVIRNGRCYPLETEGGHVSFPPSTPEEIRILEILSQQFGRVSNERLISGPGLVNIHRALSEIDGIDPGPLRPQDITMRAADGDIRATRTINLFCNIFGAITGDLVLIQGAWDGVFLTGGLVPKLLNSIQHSGFRQKFEHKGRFSAIMARIPSLAVIHPHPGLLGAAAYARDTEPVPQDIKA.

11-16 is an ATP binding site; sequence ADIGGT.

It belongs to the bacterial glucokinase family.

Its subcellular location is the cytoplasm. The enzyme catalyses D-glucose + ATP = D-glucose 6-phosphate + ADP + H(+). This Xylella fastidiosa (strain 9a5c) protein is Glucokinase.